We begin with the raw amino-acid sequence, 171 residues long: Large ribosomal subunit protein bL9 (171 aa).

It belongs to the bacterial ribosomal protein bL9 family.

Its function is as follows. Binds to the 23S rRNA. The sequence is that of Large ribosomal subunit protein bL9 from Rickettsia felis (strain ATCC VR-1525 / URRWXCal2) (Rickettsia azadi).